Here is a 1257-residue protein sequence, read N- to C-terminus: Period circadian protein homolog 2 (1257 aa).

Positions 1–59 (MNGYVDFSPSPTSPTQEPGEPQPTQAVLQEDVDMSSGSSGNENCSTGRDSQGSDCDDSG) are disordered. Residues 8-25 (SPSPTSPTQEPGEPQPTQ) show a composition bias toward low complexity. Over residues 35-53 (SSGSSGNENCSTGRDSQGS) the composition is skewed to polar residues. A Nuclear export signal 1 motif is present at residues 109–118 (LIRTLRELKV). The PAS 1 domain occupies 179-246 (ITSEYIVKNS…FHSYTTPYKL (68 aa)). The LXXLL signature appears at 306–310 (LCCLL). The PAS 2 domain maps to 319–385 (YEAPRIPPEK…MLAIHKKILQ (67 aa)). Residues 393-436 (YSPIRFRTRNGEYITLDTSWSSFINPWSRKISFIIGRHKVRVGP) form the PAC domain. The Nuclear export signal 2 motif lies at 460–469 (LTEQIHRLLM). Positions 471–567 (PVPHSGSSGY…RDSSGASLPK (97 aa)) are disordered. The tract at residues 478 to 482 (SGYGS) is important for protein stability. 2 stretches are compositionally biased toward polar residues: residues 493 to 504 (MSQTSSSDSNGQ) and 518 to 528 (SGKSQSKSHFS). The segment at 510–709 (RRSGIFKTSG…DAAGGLSQEK (200 aa)) is CSNK1E binding domain. 5 positions are modified to phosphoserine: Ser-525, Ser-528, Ser-531, Ser-538, and Ser-544. Residues 541–555 (EMQSSPPAQVRSVTT) are compositionally biased toward polar residues. Thr-554 carries the post-translational modification Phosphothreonine. Phosphoserine is present on residues Ser-659, Ser-693, Ser-697, Ser-706, Ser-758, and Ser-763. Disordered regions lie at residues 678–706 (DKKPQPELETVEDVASGPESQDDAAGGLS) and 757–833 (RSRA…CPSA). Residues 778–794 (KKTGKNRKLKSKRVKTR) carry the Nuclear localization signal motif. A compositionally biased stretch (basic residues) spans 779-792 (KTGKNRKLKSKRVK). The span at 821–832 (SPSDTSQSSCPS) shows a compositional bias: low complexity. Thr-858 is subject to Phosphothreonine. Residues 882–1067 (EFAVQPLPFA…DLCSATGSAL (186 aa)) are interaction with PPARG. Position 939 is a phosphoserine (Ser-939). At Thr-964 the chain carries Phosphothreonine. Position 971 is a phosphoserine (Ser-971). The Nuclear export signal 3 signature appears at 983 to 990 (LQLNLLQL). The tract at residues 993 to 1044 (APESSTGAAGTLGTTGTAASGLDCTSGASRDRQPKAPPTCSEPSDTQNSDAI) is disordered. The segment covering 996–1014 (SSTGAAGTLGTTGTAASGL) has biased composition (low complexity). A compositionally biased stretch (polar residues) spans 1033-1044 (SEPSDTQNSDAI). Residues 1051 to 1055 (LNLLL) carry the LXXLL motif. Residues 1070 to 1089 (SGASATSDSLGSSSLGCDTS) show a composition bias toward low complexity. The tract at residues 1070-1108 (SGASATSDSLGSSSLGCDTSRSGAGSSDTSHTSKYFGSI) is disordered. The segment covering 1090–1108 (RSGAGSSDTSHTSKYFGSI) has biased composition (polar residues). Phosphoserine is present on Ser-1126. The segment at 1157-1257 (SRDLQAVLKE…LANPRKEAQT (101 aa)) is CRY binding domain. Positions 1226–1257 (EEDSPSLGLCDTSEAKEEESGQLANPRKEAQT) are disordered.

Homodimer. Component of the circadian core oscillator, which includes the CRY proteins, CLOCK or NPAS2, BMAL1 or BMAL2, CSNK1D and/or CSNK1E, TIMELESS, and the PER proteins. Interacts with CLOCK-BMAL1 (off DNA). Interacts directly with PER1 and PER3, and through a C-terminal domain, with CRY1 and CRY2. Interacts (via PAS 2 domain) with TIMELESS. Interacts with NFIL3. Different large complexes have been identified with different repressive functions. The core of PER complexes is composed of at least PER1, PER2, PER3, CRY1, CRY2, CSNK1D and/or CSNK1E. The large PER complex involved in the repression of transcriptional termination is composed of at least PER2, CDK9, DDX5, DHX9, NCBP1 and POLR2A (active). The large PER complex involved in the histone deacetylation is composed of at least HDAC1, PER2, SFPQ and SIN3A. The large PER complex involved in the histone methylation is composed of at least PER2, CBX3, TRIM28, SUV39H1 and/or SUV39H2; CBX3 mediates the formation of the complex. Interacts with SETX; the interaction inhibits termination of circadian target genes. Interacts with the nuclear receptors HNF4A, NR1D1, NR4A2, RORA, PPARA, PPARG and THRA; the interaction with at least PPARG is ligand dependent. Interacts with PML. Interacts (phosphorylated) with BTRC and FBXW11; the interactions trigger proteasomal degradation. Interacts with NONO and SFPQ. Interacts with CAVIN3. Interacts with MAGEL2. Interacts with MAP1LC3B. Interacts with HNF4A. Acetylated. Deacetylated by SIRT1, resulting in decreased protein stability. Deacetylated by SIRT6, preventing its degradation by the proteasome, resulting in increased protein stability. In terms of processing, phosphorylated by CSNK1E and CSNK1D. Phosphorylation results in PER2 protein degradation. May be dephosphorylated by PP1. Post-translationally, ubiquitinated, leading to its proteasomal degradation. Ubiquitination may be inhibited by CRY1. In terms of tissue distribution, expressed in all tissues examined including eye, brain, heart, lung, spleen, liver, pancreas and kidney. In the CNS, highly expressed in the SCN, internal granular layer of granular cells of the olfactory bulb, tuberculum olfactorium, piriform cortex, gyrus dentatus of the hippocampus, cerebellum, pars tuberalis/median eminence, and pituitary, and moderately in the tenia tecta, caudate putamen, accumbens nucleus, superior and inferior colliculus and pineal gland.

It localises to the nucleus. The protein localises to the cytoplasm. It is found in the perinuclear region. Transcriptional repressor which forms a core component of the circadian clock. The circadian clock, an internal time-keeping system, regulates various physiological processes through the generation of approximately 24 hour circadian rhythms in gene expression, which are translated into rhythms in metabolism and behavior. It is derived from the Latin roots 'circa' (about) and 'diem' (day) and acts as an important regulator of a wide array of physiological functions including metabolism, sleep, body temperature, blood pressure, endocrine, immune, cardiovascular, and renal function. Consists of two major components: the central clock, residing in the suprachiasmatic nucleus (SCN) of the brain, and the peripheral clocks that are present in nearly every tissue and organ system. Both the central and peripheral clocks can be reset by environmental cues, also known as Zeitgebers (German for 'timegivers'). The predominant Zeitgeber for the central clock is light, which is sensed by retina and signals directly to the SCN. The central clock entrains the peripheral clocks through neuronal and hormonal signals, body temperature and feeding-related cues, aligning all clocks with the external light/dark cycle. Circadian rhythms allow an organism to achieve temporal homeostasis with its environment at the molecular level by regulating gene expression to create a peak of protein expression once every 24 hours to control when a particular physiological process is most active with respect to the solar day. Transcription and translation of core clock components (CLOCK, NPAS2, BMAL1, BMAL2, PER1, PER2, PER3, CRY1 and CRY2) plays a critical role in rhythm generation, whereas delays imposed by post-translational modifications (PTMs) are important for determining the period (tau) of the rhythms (tau refers to the period of a rhythm and is the length, in time, of one complete cycle). A diurnal rhythm is synchronized with the day/night cycle, while the ultradian and infradian rhythms have a period shorter and longer than 24 hours, respectively. Disruptions in the circadian rhythms contribute to the pathology of cardiovascular diseases, cancer, metabolic syndrome and aging. A transcription/translation feedback loop (TTFL) forms the core of the molecular circadian clock mechanism. Transcription factors, CLOCK or NPAS2 and BMAL1 or BMAL2, form the positive limb of the feedback loop, act in the form of a heterodimer and activate the transcription of core clock genes and clock-controlled genes (involved in key metabolic processes), harboring E-box elements (5'-CACGTG-3') within their promoters. The core clock genes: PER1/2/3 and CRY1/2 which are transcriptional repressors form the negative limb of the feedback loop and interact with the CLOCK|NPAS2-BMAL1|BMAL2 heterodimer inhibiting its activity and thereby negatively regulating their own expression. This heterodimer also activates nuclear receptors NR1D1/2 and RORA/B/G, which form a second feedback loop and which activate and repress BMAL1 transcription, respectively. PER1 and PER2 proteins transport CRY1 and CRY2 into the nucleus with appropriate circadian timing, but also contribute directly to repression of clock-controlled target genes through interaction with several classes of RNA-binding proteins, helicases and others transcriptional repressors. PER appears to regulate circadian control of transcription by at least three different modes. First, interacts directly with the CLOCK-BMAL1 at the tail end of the nascent transcript peak to recruit complexes containing the SIN3-HDAC that remodel chromatin to repress transcription. Second, brings H3K9 methyltransferases such as SUV39H1 and SUV39H2 to the E-box elements of the circadian target genes, like PER2 itself or PER1. The recruitment of each repressive modifier to the DNA seems to be very precisely temporally orchestrated by the large PER complex, the deacetylases acting before than the methyltransferases. Additionally, large PER complexes are also recruited to the target genes 3' termination site through interactions with RNA-binding proteins and helicases that may play a role in transcription termination to regulate transcription independently of CLOCK-BMAL1 interactions. Recruitment of large PER complexes to the elongating polymerase at PER and CRY termination sites inhibited SETX action, impeding RNA polymerase II release and thereby repressing transcriptional reinitiation. May propagate clock information to metabolic pathways via the interaction with nuclear receptors. Coactivator of PPARA and corepressor of NR1D1, binds rhythmically at the promoter of nuclear receptors target genes like BMAL1 or G6PC1. Directly and specifically represses PPARG proadipogenic activity by blocking PPARG recruitment to target promoters and thereby transcriptional activation. Required for fatty acid and lipid metabolism, is involved as well in the regulation of circulating insulin levels. Plays an important role in the maintenance of cardiovascular functions through the regulation of NO and vasodilatatory prostaglandins production in aortas. Controls circadian glutamate uptake in synaptic vesicles through the regulation of VGLUT1 expression. May also be involved in the regulation of inflammatory processes. Represses the CLOCK-BMAL1 induced transcription of BHLHE40/DEC1 and ATF4. Negatively regulates the formation of the TIMELESS-CRY1 complex by competing with TIMELESS for binding to CRY1. In Rattus norvegicus (Rat), this protein is Period circadian protein homolog 2.